The chain runs to 306 residues: MTNLNEKQLITEIVGLARSQGLTVHSENAQLNETGMDFQVVFAKDDTGMPWVLRKPRRSDVVERASAEGITLAFLRANLTADVPDWRIHTPELIAYPMLKGTPAAGIDLEQKQYVWNMDHQPPSDDFVRTLADILAELHGTDQISAGQSGIEVIRPEDFRQMTADSMVDVKNKLGVSTTLWERWQKWVDDDAYWPGFSSLIHGDLHPPHILIDQNGRVTGLLDWTEAKVADPAKDFVLYQTIFGEKETARLLEYYDQAGGRIWAKMQEHISEMQAAYPVEIAKLALQTQQEEHINMALEALGVTSD.

The active-site Proton acceptor is aspartate 204.

The protein belongs to the aminoglycoside phosphotransferase family.

This is an uncharacterized protein from Bacillus subtilis (strain 168).